The sequence spans 78 residues: Conotoxin TsMSGL-11 (78 aa).

A signal peptide spans 1 to 24; it reads MSGLGIMVLTLLLLVFMATSHQDA. A propeptide spanning residues 25-44 is cleaved from the precursor; it reads GEKQATQRDAINVRRRRSIT. Disulfide bonds link Cys51/Cys63, Cys55/Cys72, and Cys62/Cys76. Phe77 is subject to Phenylalanine amide.

Belongs to the conotoxin O3 superfamily. As to expression, expressed by the venom duct.

The protein localises to the secreted. This chain is Conotoxin TsMSGL-11, found in Conus tessulatus (Tessellate cone).